The following is a 296-amino-acid chain: MAATPAFRGSFTALVTPFKNGSLDEEAFRKLVNWQIAEGTTGLVPVGTTGESPTLSHDEHHKVVEWCVEEAKGRVPVIAGAGSNSTTEAVELAKHAEKAGADAVLVVTPYYNKPTQEGMYLHFKAINDAIGIPIIIYNIPPRSVVDMSVDTMSRLYELQNIVGVKDATANLGRVSQQRHAMGPDFIQLSGEDMTALAYMAAGGHGCISVVSNVAPKACSDLMAAVFKGDYAGALKIQDRLVPLHDAVFKEPGVSGAKHGLTLLGRIQEEVRLPLIPVSAPTGQAIRSAMIHAGLLN.

Threonine 49 contributes to the pyruvate binding site. Catalysis depends on tyrosine 137, which acts as the Proton donor/acceptor. The active-site Schiff-base intermediate with substrate is the lysine 165. A pyruvate-binding site is contributed by isoleucine 207.

Belongs to the DapA family. As to quaternary structure, homotetramer; dimer of dimers.

It is found in the cytoplasm. The enzyme catalyses L-aspartate 4-semialdehyde + pyruvate = (2S,4S)-4-hydroxy-2,3,4,5-tetrahydrodipicolinate + H2O + H(+). It participates in amino-acid biosynthesis; L-lysine biosynthesis via DAP pathway; (S)-tetrahydrodipicolinate from L-aspartate: step 3/4. In terms of biological role, catalyzes the condensation of (S)-aspartate-beta-semialdehyde [(S)-ASA] and pyruvate to 4-hydroxy-tetrahydrodipicolinate (HTPA). This chain is 4-hydroxy-tetrahydrodipicolinate synthase, found in Rhodopseudomonas palustris (strain BisA53).